Consider the following 288-residue polypeptide: UTP--glucose-1-phosphate uridylyltransferase (288 aa).

This sequence belongs to the UDPGP type 2 family.

It catalyses the reaction alpha-D-glucose 1-phosphate + UTP + H(+) = UDP-alpha-D-glucose + diphosphate. It functions in the pathway glycolipid metabolism; diglucosyl-diacylglycerol biosynthesis. Catalyzes the formation of UDP-glucose from glucose-1-phosphate and UTP. This is an intermediate step in the biosynthesis of diglucosyl-diacylglycerol (Glc2-DAG), i.e. a glycolipid found in the membrane, which is also used as a membrane anchor for lipoteichoic acid (LTA). The chain is UTP--glucose-1-phosphate uridylyltransferase (gtaB) from Staphylococcus epidermidis (strain ATCC 35984 / DSM 28319 / BCRC 17069 / CCUG 31568 / BM 3577 / RP62A).